We begin with the raw amino-acid sequence, 576 residues long: Apolipoprotein N-acyltransferase 1 (576 aa).

The next 7 helical transmembrane spans lie at 15-35 (LILC…FSFF), 38-58 (GVFA…TSIW), 60-80 (AFLW…YWIP), 92-112 (FVSI…FFLF), 128-148 (YILL…FQIF), 168-188 (ICGV…FLIL), and 204-224 (IASL…IGYI). The 303-residue stretch at 236-538 (LSVLMIQPDT…TGTRAFSIRL (303 aa)) folds into the CN hydrolase domain. Glu285 serves as the catalytic Proton acceptor. Residue Lys355 is part of the active site. Cys446 (nucleophile) is an active-site residue. The helical transmembrane segment at 549–569 (FGNSFLWIFCILILISRLIFV) threads the bilayer.

The protein belongs to the CN hydrolase family. Apolipoprotein N-acyltransferase subfamily.

The protein localises to the cell inner membrane. It catalyses the reaction N-terminal S-1,2-diacyl-sn-glyceryl-L-cysteinyl-[lipoprotein] + a glycerophospholipid = N-acyl-S-1,2-diacyl-sn-glyceryl-L-cysteinyl-[lipoprotein] + a 2-acyl-sn-glycero-3-phospholipid + H(+). It functions in the pathway protein modification; lipoprotein biosynthesis (N-acyl transfer). Its function is as follows. Catalyzes the phospholipid dependent N-acylation of the N-terminal cysteine of apolipoprotein, the last step in lipoprotein maturation. This Leptospira interrogans serogroup Icterohaemorrhagiae serovar Lai (strain 56601) protein is Apolipoprotein N-acyltransferase 1.